The following is a 276-amino-acid chain: Rhomboid protease GlpG (276 aa).

The next 6 membrane-spanning stretches (helical) occupy residues 94–114 (GPVTWVVMIACVVVFIAMQIL), 142–162 (ALMHFSLMHILFNLLWWWYLG), 169–189 (LGSGKLIVITLISALLSGYVQ), 192–212 (FSGPWFGGLSGVVYALMGYVW), 229–249 (LIIFALIWIIAGWFDLFGMSM), and 250–270 (ANGAHIAGLAVGLAMAFVDSL). Serine 201 acts as the Nucleophile in catalysis. Histidine 254 is a catalytic residue.

It belongs to the peptidase S54 family.

The protein resides in the cell inner membrane. The enzyme catalyses Cleaves type-1 transmembrane domains using a catalytic dyad composed of serine and histidine that are contributed by different transmembrane domains.. In terms of biological role, rhomboid-type serine protease that catalyzes intramembrane proteolysis. The protein is Rhomboid protease GlpG of Shigella boydii serotype 4 (strain Sb227).